The sequence spans 423 residues: Putative serpin-Z12 (423 aa).

The tract at residues Met1–Val25 is disordered. The interval Gly370 to Val394 is RCL.

It belongs to the serpin family.

Its function is as follows. Probable serine protease inhibitor. This chain is Putative serpin-Z12, found in Oryza sativa subsp. japonica (Rice).